The primary structure comprises 394 residues: Cysteine protease ATG4B (394 aa).

Cys-74 functions as the Nucleophile in the catalytic mechanism. Residues Asp-280 and His-282 contribute to the active site. The LIR motif lies at 389–392 (FEIL).

The protein belongs to the peptidase C54 family.

Its subcellular location is the cytoplasm. The protein localises to the cytosol. It is found in the cytoplasmic vesicle. The protein resides in the autophagosome. It localises to the endoplasmic reticulum. Its subcellular location is the mitochondrion. It carries out the reaction [protein]-C-terminal L-amino acid-glycyl-phosphatidylethanolamide + H2O = [protein]-C-terminal L-amino acid-glycine + a 1,2-diacyl-sn-glycero-3-phosphoethanolamine. The enzyme catalyses [protein]-C-terminal L-amino acid-glycyl-phosphatidylserine + H2O = [protein]-C-terminal L-amino acid-glycine + a 1,2-diacyl-sn-glycero-3-phospho-L-serine. Its function is as follows. Cysteine protease that plays a key role in autophagy by mediating both proteolytic activation and delipidation of ATG8 family proteins. Required for canonical autophagy (macroautophagy), non-canonical autophagy as well as for mitophagy. The protease activity is required for proteolytic activation of ATG8 family proteins: cleaves the C-terminal amino acid of ATG8 proteins to reveal a C-terminal glycine. Exposure of the glycine at the C-terminus is essential for ATG8 proteins conjugation to phosphatidylethanolamine (PE) and insertion to membranes, which is necessary for autophagy. Protease activity is also required to counteract formation of high-molecular weight conjugates of ATG8 proteins (ATG8ylation): acts as a deubiquitinating-like enzyme that removes ATG8 conjugated to other proteins, such as ATG3. In addition to the protease activity, also mediates delipidation of ATG8 family proteins. Catalyzes delipidation of PE-conjugated forms of ATG8 proteins during macroautophagy. Also involved in non-canonical autophagy, a parallel pathway involving conjugation of ATG8 proteins to single membranes at endolysosomal compartments, by catalyzing delipidation of ATG8 proteins conjugated to phosphatidylserine (PS). This chain is Cysteine protease ATG4B, found in Danio rerio (Zebrafish).